A 483-amino-acid polypeptide reads, in one-letter code: Glycogen synthase (483 aa).

K18 is a binding site for ADP-alpha-D-glucose.

It belongs to the glycosyltransferase 1 family. Bacterial/plant glycogen synthase subfamily.

It carries out the reaction [(1-&gt;4)-alpha-D-glucosyl](n) + ADP-alpha-D-glucose = [(1-&gt;4)-alpha-D-glucosyl](n+1) + ADP + H(+). It functions in the pathway glycan biosynthesis; glycogen biosynthesis. Synthesizes alpha-1,4-glucan chains using ADP-glucose. This chain is Glycogen synthase, found in Rhodopseudomonas palustris (strain ATCC BAA-98 / CGA009).